The primary structure comprises 430 residues: Ribosomal protein uS12 methylthiotransferase RimO (430 aa).

The 116-residue stretch at 1–116 folds into the MTTase N-terminal domain; it reads MRVGIKVLGC…IANAIENGTD (116 aa). [4Fe-4S] cluster-binding residues include C10, C46, C79, C148, C152, and C155. Residues 134-365 form the Radical SAM core domain; sequence LEERPYAYVK…LLQAEISNSR (232 aa). The TRAM domain occupies 367-430; it reads DRFVGKKLKF…DEYDMWGSVI (64 aa).

The protein belongs to the methylthiotransferase family. RimO subfamily. As to quaternary structure, monomer. The cofactor is [4Fe-4S] cluster.

The protein resides in the cytoplasm. The catalysed reaction is L-aspartate(89)-[ribosomal protein uS12]-hydrogen + (sulfur carrier)-SH + AH2 + 2 S-adenosyl-L-methionine = 3-methylsulfanyl-L-aspartate(89)-[ribosomal protein uS12]-hydrogen + (sulfur carrier)-H + 5'-deoxyadenosine + L-methionine + A + S-adenosyl-L-homocysteine + 2 H(+). Catalyzes the methylthiolation of an aspartic acid residue of ribosomal protein uS12. The polypeptide is Ribosomal protein uS12 methylthiotransferase RimO (Thermotoga maritima (strain ATCC 43589 / DSM 3109 / JCM 10099 / NBRC 100826 / MSB8)).